We begin with the raw amino-acid sequence, 204 residues long: Small ribosomal subunit protein eS8 (204 aa).

It belongs to the eukaryotic ribosomal protein eS8 family.

The sequence is that of Small ribosomal subunit protein eS8 (RPS8) from Griffithsia japonica (Red alga).